The following is a 206-amino-acid chain: Transmembrane emp24 domain-containing protein bai (206 aa).

The N-terminal stretch at 1–20 (MMKAILATLAIFGCIWPGQS) is a signal peptide. Topologically, residues 21-172 (VMFHLTPNTQ…RDTNEKTNSR (152 aa)) are lumenal. The GOLD domain maps to 30-140 (QKCLKEDIQA…LKPLEVDLKR (111 aa)). Residues 173-193 (VLFFSIFSMCCLLGLATWQVL) traverse the membrane as a helical segment. Over 194-206 (YLRRYFKAKKLIE) the chain is Cytoplasmic.

The protein belongs to the EMP24/GP25L family.

Its subcellular location is the membrane. In terms of biological role, eca and bai are essential, though not redundant, for dorsoventral patterning of the embryo. Specifically required during early embryogenesis for the activity of maternal tkv, while the zygotic tkv is not affected. This chain is Transmembrane emp24 domain-containing protein bai, found in Drosophila willistoni (Fruit fly).